A 396-amino-acid polypeptide reads, in one-letter code: Flavohemoprotein (396 aa).

The Globin domain occupies 1–136 (MLDAQTIATV…LANVFIHREA (136 aa)). His-85 is a binding site for heme b. Active-site charge relay system residues include Tyr-95 and Glu-135. The reductase stretch occupies residues 147–396 (GGWEGTRPFR…YECFGPHKVL (250 aa)). The 106-residue stretch at 150–255 (EGTRPFRIVA…AAPAGDFFMN (106 aa)) folds into the FAD-binding FR-type domain. FAD-binding positions include Tyr-188 and 204 to 207 (RQYS). Residue 268–273 (GVGQTP) participates in NADP(+) binding. 389–392 (CFGP) is an FAD binding site.

This sequence belongs to the globin family. Two-domain flavohemoproteins subfamily. In the C-terminal section; belongs to the flavoprotein pyridine nucleotide cytochrome reductase family. In terms of assembly, monomer. The cofactor is heme b. FAD is required as a cofactor.

The enzyme catalyses 2 nitric oxide + NADPH + 2 O2 = 2 nitrate + NADP(+) + H(+). The catalysed reaction is 2 nitric oxide + NADH + 2 O2 = 2 nitrate + NAD(+) + H(+). Functionally, is involved in NO detoxification in an aerobic process, termed nitric oxide dioxygenase (NOD) reaction that utilizes O(2) and NAD(P)H to convert NO to nitrate, which protects the bacterium from various noxious nitrogen compounds. Therefore, plays a central role in the inducible response to nitrosative stress. The sequence is that of Flavohemoprotein (hmp) from Salmonella typhimurium (strain LT2 / SGSC1412 / ATCC 700720).